The following is a 186-amino-acid chain: ATP synthase subunit delta (186 aa).

This sequence belongs to the ATPase delta chain family. As to quaternary structure, F-type ATPases have 2 components, F(1) - the catalytic core - and F(0) - the membrane proton channel. F(1) has five subunits: alpha(3), beta(3), gamma(1), delta(1), epsilon(1). F(0) has three main subunits: a(1), b(2) and c(10-14). The alpha and beta chains form an alternating ring which encloses part of the gamma chain. F(1) is attached to F(0) by a central stalk formed by the gamma and epsilon chains, while a peripheral stalk is formed by the delta and b chains.

It localises to the cell inner membrane. Functionally, f(1)F(0) ATP synthase produces ATP from ADP in the presence of a proton or sodium gradient. F-type ATPases consist of two structural domains, F(1) containing the extramembraneous catalytic core and F(0) containing the membrane proton channel, linked together by a central stalk and a peripheral stalk. During catalysis, ATP synthesis in the catalytic domain of F(1) is coupled via a rotary mechanism of the central stalk subunits to proton translocation. This protein is part of the stalk that links CF(0) to CF(1). It either transmits conformational changes from CF(0) to CF(1) or is implicated in proton conduction. This chain is ATP synthase subunit delta, found in Leptospira borgpetersenii serovar Hardjo-bovis (strain JB197).